The following is a 206-amino-acid chain: Thymidylate kinase (206 aa).

14–21 (GGEGIGKS) lines the ATP pocket.

This sequence belongs to the thymidylate kinase family.

The catalysed reaction is dTMP + ATP = dTDP + ADP. Functionally, phosphorylation of dTMP to form dTDP in both de novo and salvage pathways of dTTP synthesis. This Rickettsia bellii (strain OSU 85-389) protein is Thymidylate kinase.